A 311-amino-acid polypeptide reads, in one-letter code: Salutaridine reductase (311 aa).

NADP(+) is bound at residue valine 17–valine 40. Residue serine 180 participates in substrate binding. Tyrosine 236 functions as the Proton acceptor in the catalytic mechanism.

The protein belongs to the short-chain dehydrogenases/reductases (SDR) family.

It carries out the reaction (7S)-salutaridinol + NADP(+) = salutaridine + NADPH + H(+). Its activity is regulated as follows. Subject to substrate inhibition at salutaridine concentrations higher than 20 to 30 uM. Its function is as follows. Involved in biosynthesis of morphinan-type benzylisoquinoline alkaloids. Catalyzes the stereospecific conversion of salutaridine to salutaridinol. This Papaver bracteatum (Great scarlet poppy) protein is Salutaridine reductase.